Here is a 428-residue protein sequence, read N- to C-terminus: MAGEFRLLSHLCSRGSKVGELAQDTRTSLKTSWYLLGPAFVAAIAYVDPGNVAANVSSGAQFGYLLLWVIVAANVMAALVQYLSAKLGLVTGRSLPEAIGKRMGRPARLAYWAQAEIVAMATDVAEVIGGAIALRIMFNLPLPIGGIITGVVSLLLLTIQDRRGQRLFERVITALLLVIAIGFTASFFVVTPPPNAVLGGLAPRFQGTESVLLAAAIMGATVMPHAVYLHSGLARDRHGHPDPGPQRRRLLRVTRWDVGLAMLIAGGVNAAMLLVAALNMRGRGDTASIEGAYHAVHDTLGATIAVLFAVGLLASGLASSSVGAYAGAMIMQGLLHWSVPMLVRRLITLGPALAILTLGFDPTRTLVLSQVVLSFGIPFAVLPLVKLTGSPAVMGGDTNHRATTWVGWVVAVMVSLLNVMLIYLTVTG.

11 helical membrane-spanning segments follow: residues 33-53 (WYLLGPAFVAAIAYVDPGNVA), 60-80 (AQFGYLLLWVIVAANVMAALV), 114-134 (QAEIVAMATDVAEVIGGAIAL), 136-156 (IMFNLPLPIGGIITGVVSLLL), 171-191 (VITALLLVIAIGFTASFFVVT), 210-230 (SVLLAAAIMGATVMPHAVYLH), 258-278 (VGLAMLIAGGVNAAMLLVAAL), 299-319 (TLGATIAVLFAVGLLASGLAS), 334-356 (LLHWSVPMLVRRLITLGPALAIL), 365-385 (TLVLSQVVLSFGIPFAVLPLV), and 406-426 (VGWVVAVMVSLLNVMLIYLTV).

The protein belongs to the NRAMP family.

The protein localises to the cell membrane. Its function is as follows. H(+)-stimulated, divalent metal cation uptake system. Transports zinc and iron. Can also interact with manganese and copper. The polypeptide is Divalent metal cation transporter MntH (Mycobacterium tuberculosis (strain CDC 1551 / Oshkosh)).